The chain runs to 122 residues: MIDKLKKSVSKIRRAERSRFKLKKSGSRPRLVFNKSNKYLSCQIVDDIQGVTLAYATTSEKTFSSEGKSKKDVGAAKVLGKLIAERGSQKGVKQVMLDRSGMIFHGRIAAFAEGAREAGLEF.

It belongs to the universal ribosomal protein uL18 family. Part of the 50S ribosomal subunit; part of the 5S rRNA/L5/L18/L25 subcomplex. Contacts the 5S and 23S rRNAs.

Its function is as follows. This is one of the proteins that bind and probably mediate the attachment of the 5S RNA into the large ribosomal subunit, where it forms part of the central protuberance. This is Large ribosomal subunit protein uL18 from Leptospira borgpetersenii serovar Hardjo-bovis (strain JB197).